Here is a 732-residue protein sequence, read N- to C-terminus: Inducible ornithine decarboxylase (732 aa).

The residue at position 355 (lysine 355) is an N6-(pyridoxal phosphate)lysine.

It belongs to the Orn/Lys/Arg decarboxylase class-I family. The cofactor is pyridoxal 5'-phosphate.

It carries out the reaction L-ornithine + H(+) = putrescine + CO2. It functions in the pathway amine and polyamine biosynthesis; putrescine biosynthesis via L-ornithine pathway; putrescine from L-ornithine: step 1/1. The first enzyme leading to putrescine and thus polyamine synthesis. In Escherichia coli (strain K12), this protein is Inducible ornithine decarboxylase.